We begin with the raw amino-acid sequence, 349 residues long: MDIPQKYKLYTKKKIIFGIILLITLFLSSIYALCVGDYKLTVNQVVNALMGYGKDDINLVIWNIRLPRIFAAIISGMSLAVAGAVMQCILRNPLASPFTMGISHGAMFGACFAIIMFGFGGAESTGRIFINNPYMITIFAFLGALIGVVVILLLAKLRGLTPEAMILAGVAMSSLFTAGTMLIQYFADDLQLAAMVYWTFGDLGRAIWTEIYIMAAVMIPSLIYFMYKRWDYNALEAGEETAKSLGVNTERTRLIGMLVASLLTSVNVAFLGIIGFVGLICPHIVRICIGGDYRFLIPISALFGAVLLLIADTFARTIIAPIVLPVGILTSFLGAPMFLYLLLKMYKRV.

The next 9 membrane-spanning stretches (helical) occupy residues 15–35, 69–89, 100–120, 135–155, 166–186, 206–226, 254–274, 295–315, and 318–338; these read IIFGIILLITLFLSSIYALCV, IFAAIISGMSLAVAGAVMQCI, MGISHGAMFGACFAIIMFGFG, MITIFAFLGALIGVVVILLLA, ILAGVAMSSLFTAGTMLIQYF, AIWTEIYIMAAVMIPSLIYFM, LIGMLVASLLTSVNVAFLGII, FLIPISALFGAVLLLIADTFA, and IIAPIVLPVGILTSFLGAPMF.

It belongs to the binding-protein-dependent transport system permease family. FecCD subfamily.

The protein localises to the cell membrane. Its function is as follows. Probably part of a binding-protein-dependent transport system. Probably responsible for the translocation of the substrate across the membrane. The chain is Putative ABC transporter permease protein MJ0087 from Methanocaldococcus jannaschii (strain ATCC 43067 / DSM 2661 / JAL-1 / JCM 10045 / NBRC 100440) (Methanococcus jannaschii).